A 650-amino-acid polypeptide reads, in one-letter code: 1-deoxy-D-xylulose-5-phosphate synthase (650 aa).

Thiamine diphosphate-binding positions include His-73 and 113–115 (SHA). Asp-145 contributes to the Mg(2+) binding site. Residues 146–147 (GA), Asn-175, Tyr-287, and Glu-369 each bind thiamine diphosphate. Asn-175 is a Mg(2+) binding site.

Belongs to the transketolase family. DXPS subfamily. Homodimer. It depends on Mg(2+) as a cofactor. Requires thiamine diphosphate as cofactor.

The catalysed reaction is D-glyceraldehyde 3-phosphate + pyruvate + H(+) = 1-deoxy-D-xylulose 5-phosphate + CO2. It functions in the pathway metabolic intermediate biosynthesis; 1-deoxy-D-xylulose 5-phosphate biosynthesis; 1-deoxy-D-xylulose 5-phosphate from D-glyceraldehyde 3-phosphate and pyruvate: step 1/1. In terms of biological role, catalyzes the acyloin condensation reaction between C atoms 2 and 3 of pyruvate and glyceraldehyde 3-phosphate to yield 1-deoxy-D-xylulose-5-phosphate (DXP). In Leifsonia xyli subsp. xyli (strain CTCB07), this protein is 1-deoxy-D-xylulose-5-phosphate synthase.